The following is a 329-amino-acid chain: Elongation factor Ts (329 aa).

The interval 79–82 (TDFV) is involved in Mg(2+) ion dislocation from EF-Tu.

It belongs to the EF-Ts family.

The protein resides in the cytoplasm. In terms of biological role, associates with the EF-Tu.GDP complex and induces the exchange of GDP to GTP. It remains bound to the aminoacyl-tRNA.EF-Tu.GTP complex up to the GTP hydrolysis stage on the ribosome. The sequence is that of Elongation factor Ts from Parabacteroides distasonis (strain ATCC 8503 / DSM 20701 / CIP 104284 / JCM 5825 / NCTC 11152).